A 643-amino-acid polypeptide reads, in one-letter code: Phosphomethylpyrimidine synthase (643 aa).

Substrate-binding positions include N248, M277, Y306, H342, 362 to 364, 403 to 406, and E442; these read SRG and DGLR. Residue H446 participates in Zn(2+) binding. A substrate-binding site is contributed by Y469. Zn(2+) is bound at residue H510. [4Fe-4S] cluster is bound by residues C590, C593, and C598.

Belongs to the ThiC family. As to quaternary structure, homodimer. The cofactor is [4Fe-4S] cluster.

It catalyses the reaction 5-amino-1-(5-phospho-beta-D-ribosyl)imidazole + S-adenosyl-L-methionine = 4-amino-2-methyl-5-(phosphooxymethyl)pyrimidine + CO + 5'-deoxyadenosine + formate + L-methionine + 3 H(+). The protein operates within cofactor biosynthesis; thiamine diphosphate biosynthesis. Its function is as follows. Catalyzes the synthesis of the hydroxymethylpyrimidine phosphate (HMP-P) moiety of thiamine from aminoimidazole ribotide (AIR) in a radical S-adenosyl-L-methionine (SAM)-dependent reaction. In Burkholderia multivorans (strain ATCC 17616 / 249), this protein is Phosphomethylpyrimidine synthase.